We begin with the raw amino-acid sequence, 559 residues long: MRSDTIKSGFEKAPHRSLLKATGAIRSSSDYRKPFIGICNSYNELIPGHTHLQELGRIAKEAVREAGGVPFEFNTIGVCDGIAMGHIGMRYSLASRELIADSVETVAEAHRLDGLVCIPNCDKITPGMMMAALRINIPVIFVSGGPMKAGHTPEGKTVDLISVFEAVGQCSNGSITEGELQNIEEHACPGCGSCSGMFTANSMNCLSEALGFALPGNGTIVAEDPRRLELVKAASRRIVDLVENNVRPRDILTRQALLNAFALDFAMGGSTNTILHTLAIANEAGLSFDFSELNALSAKTPYICQVSPATMAVHIEDVDRAGGISAILKELSSIDGLLDLSAITVTGKTLGENIANAEVLDRSVIRSISDPYSATGGLAVLYGNLAPQGAVVKTGAVSPQMMQHSGPAKVYNAQDDAIKGIMEGDVKAGDVVVIRYEGPKGGPGMPEMLSPTSAIMGRGLGDSVALITDGRFSGGSRGACIGHVSPEAAERGPIAALQNGDIITIDIPARTMSVALSESTIKERLAQLPPFEPKIKRGYLARYAQLVTSANTGAILGHL.

D80 contributes to the Mg(2+) binding site. C121 is a binding site for [2Fe-2S] cluster. Positions 122 and 123 each coordinate Mg(2+). Position 123 is an N6-carboxylysine (K123). A [2Fe-2S] cluster-binding site is contributed by C194. E447 lines the Mg(2+) pocket. The active-site Proton acceptor is the S473.

Belongs to the IlvD/Edd family. In terms of assembly, homodimer. Requires [2Fe-2S] cluster as cofactor. Mg(2+) is required as a cofactor.

The catalysed reaction is (2R)-2,3-dihydroxy-3-methylbutanoate = 3-methyl-2-oxobutanoate + H2O. It carries out the reaction (2R,3R)-2,3-dihydroxy-3-methylpentanoate = (S)-3-methyl-2-oxopentanoate + H2O. The protein operates within amino-acid biosynthesis; L-isoleucine biosynthesis; L-isoleucine from 2-oxobutanoate: step 3/4. Its pathway is amino-acid biosynthesis; L-valine biosynthesis; L-valine from pyruvate: step 3/4. Its function is as follows. Functions in the biosynthesis of branched-chain amino acids. Catalyzes the dehydration of (2R,3R)-2,3-dihydroxy-3-methylpentanoate (2,3-dihydroxy-3-methylvalerate) into 2-oxo-3-methylpentanoate (2-oxo-3-methylvalerate) and of (2R)-2,3-dihydroxy-3-methylbutanoate (2,3-dihydroxyisovalerate) into 2-oxo-3-methylbutanoate (2-oxoisovalerate), the penultimate precursor to L-isoleucine and L-valine, respectively. This chain is Dihydroxy-acid dehydratase, found in Chlorobium chlorochromatii (strain CaD3).